We begin with the raw amino-acid sequence, 221 residues long: Elongation factor Ts (221 aa).

The tract at residues 82–85 is involved in Mg(2+) ion dislocation from EF-Tu; the sequence is TDFV.

This sequence belongs to the EF-Ts family.

The protein localises to the cytoplasm. In terms of biological role, associates with the EF-Tu.GDP complex and induces the exchange of GDP to GTP. It remains bound to the aminoacyl-tRNA.EF-Tu.GTP complex up to the GTP hydrolysis stage on the ribosome. This is Elongation factor Ts from Synechococcus elongatus (strain ATCC 33912 / PCC 7942 / FACHB-805) (Anacystis nidulans R2).